A 242-amino-acid polypeptide reads, in one-letter code: MSSHQKLYEGKAKILYTTDDPEILLTYFKDDATAFNAQKKGTITGKGKINCTISSHIFKLLETNEIPTHFIDCPASDKMRVRRVKILPIEVIVRNIAAGSLCRQTLLTEGTILKFPLVEYCYKNDTLQDPLLTRDRLLILELATPEQLEQIRTFAVKINDILINFFNQCQITLVDFKIEFGLDKHENLILADEISPDSCRLWDQYQTDPNQRVMDKDRFRRDLGKVETGYQQVLERILAHQG.

This sequence belongs to the SAICAR synthetase family.

It carries out the reaction 5-amino-1-(5-phospho-D-ribosyl)imidazole-4-carboxylate + L-aspartate + ATP = (2S)-2-[5-amino-1-(5-phospho-beta-D-ribosyl)imidazole-4-carboxamido]succinate + ADP + phosphate + 2 H(+). Its pathway is purine metabolism; IMP biosynthesis via de novo pathway; 5-amino-1-(5-phospho-D-ribosyl)imidazole-4-carboxamide from 5-amino-1-(5-phospho-D-ribosyl)imidazole-4-carboxylate: step 1/2. This is Phosphoribosylaminoimidazole-succinocarboxamide synthase from Trichodesmium erythraeum (strain IMS101).